Reading from the N-terminus, the 367-residue chain is Alanine racemase (367 aa).

Lys34 acts as the Proton acceptor; specific for D-alanine in catalysis. Lys34 is modified (N6-(pyridoxal phosphate)lysine). Arg131 is a binding site for substrate. Tyr258 (proton acceptor; specific for L-alanine) is an active-site residue. Position 306 (Met306) interacts with substrate.

Belongs to the alanine racemase family. Pyridoxal 5'-phosphate serves as cofactor.

It carries out the reaction L-alanine = D-alanine. The protein operates within amino-acid biosynthesis; D-alanine biosynthesis; D-alanine from L-alanine: step 1/1. Functionally, catalyzes the interconversion of L-alanine and D-alanine. May also act on other amino acids. The sequence is that of Alanine racemase (alr) from Corynebacterium efficiens (strain DSM 44549 / YS-314 / AJ 12310 / JCM 11189 / NBRC 100395).